Consider the following 288-residue polypeptide: Signal recognition particle receptor FtsY (288 aa).

Residues Gly-93–Thr-100, Asp-175–Arg-179, and Thr-233–Asp-236 each bind GTP.

The protein belongs to the GTP-binding SRP family. FtsY subfamily. As to quaternary structure, part of the signal recognition particle protein translocation system, which is composed of SRP and FtsY.

Its subcellular location is the cell membrane. It is found in the cytoplasm. It catalyses the reaction GTP + H2O = GDP + phosphate + H(+). Functionally, involved in targeting and insertion of nascent membrane proteins into the cytoplasmic membrane. Acts as a receptor for the complex formed by the signal recognition particle (SRP) and the ribosome-nascent chain (RNC). This chain is Signal recognition particle receptor FtsY, found in Thermoplasma acidophilum (strain ATCC 25905 / DSM 1728 / JCM 9062 / NBRC 15155 / AMRC-C165).